A 269-amino-acid polypeptide reads, in one-letter code: Triosephosphate isomerase (269 aa).

Residue 8–10 (NWK) participates in substrate binding. His105 (electrophile) is an active-site residue. The Proton acceptor role is filled by Glu183. Substrate-binding positions include Gly189, Ser227, and 248–249 (GG).

This sequence belongs to the triosephosphate isomerase family. As to quaternary structure, homodimer.

The protein localises to the cytoplasm. It carries out the reaction D-glyceraldehyde 3-phosphate = dihydroxyacetone phosphate. Its pathway is carbohydrate biosynthesis; gluconeogenesis. It participates in carbohydrate degradation; glycolysis; D-glyceraldehyde 3-phosphate from glycerone phosphate: step 1/1. Functionally, involved in the gluconeogenesis. Catalyzes stereospecifically the conversion of dihydroxyacetone phosphate (DHAP) to D-glyceraldehyde-3-phosphate (G3P). The sequence is that of Triosephosphate isomerase from Psychrobacter arcticus (strain DSM 17307 / VKM B-2377 / 273-4).